We begin with the raw amino-acid sequence, 215 residues long: Guanylate kinase (215 aa).

A Guanylate kinase-like domain is found at 9-187; that stretch reads GTLYIVSAPS…ALDELSCLVH (179 aa). Position 16 to 23 (16 to 23) interacts with ATP; sequence APSGAGKT.

This sequence belongs to the guanylate kinase family.

The protein resides in the cytoplasm. The catalysed reaction is GMP + ATP = GDP + ADP. Its function is as follows. Essential for recycling GMP and indirectly, cGMP. The protein is Guanylate kinase of Chromohalobacter salexigens (strain ATCC BAA-138 / DSM 3043 / CIP 106854 / NCIMB 13768 / 1H11).